The sequence spans 758 residues: 5-methyltetrahydropteroyltriglutamate--homocysteine methyltransferase (758 aa).

5-methyltetrahydropteroyltri-L-glutamate-binding positions include 17–20 and K117; that span reads RELK. L-homocysteine-binding positions include 434 to 436 and E487; that span reads IGS. L-methionine contacts are provided by residues 434 to 436 and E487; that span reads IGS. Residues 518–519 and W564 contribute to the 5-methyltetrahydropteroyltri-L-glutamate site; that span reads RC. D602 is a binding site for L-homocysteine. D602 contributes to the L-methionine binding site. E608 contacts 5-methyltetrahydropteroyltri-L-glutamate. Zn(2+) is bound by residues H644, C646, and E668. Residue H697 is the Proton donor of the active site. Zn(2+) is bound at residue C729.

The protein belongs to the vitamin-B12 independent methionine synthase family. It depends on Zn(2+) as a cofactor.

The enzyme catalyses 5-methyltetrahydropteroyltri-L-glutamate + L-homocysteine = tetrahydropteroyltri-L-glutamate + L-methionine. It participates in amino-acid biosynthesis; L-methionine biosynthesis via de novo pathway; L-methionine from L-homocysteine (MetE route): step 1/1. Its function is as follows. Catalyzes the transfer of a methyl group from 5-methyltetrahydrofolate to homocysteine resulting in methionine formation. This chain is 5-methyltetrahydropteroyltriglutamate--homocysteine methyltransferase, found in Yersinia pseudotuberculosis serotype I (strain IP32953).